We begin with the raw amino-acid sequence, 197 residues long: Peptide deformylase (197 aa).

Positions 106 and 148 each coordinate Fe cation. The active site involves Glu149. A Fe cation-binding site is contributed by His152.

Belongs to the polypeptide deformylase family. Requires Fe(2+) as cofactor.

It carries out the reaction N-terminal N-formyl-L-methionyl-[peptide] + H2O = N-terminal L-methionyl-[peptide] + formate. In terms of biological role, removes the formyl group from the N-terminal Met of newly synthesized proteins. Requires at least a dipeptide for an efficient rate of reaction. N-terminal L-methionine is a prerequisite for activity but the enzyme has broad specificity at other positions. This chain is Peptide deformylase, found in Mycobacterium bovis (strain ATCC BAA-935 / AF2122/97).